Consider the following 131-residue polypeptide: Conotoxin Cal8.1 (131 aa).

A signal peptide spans 1 to 19 (MKLLLTLLLGSALMCITLA). Positions 20-38 (DECGLGTHRPVKEVIDNVR) are excised as a propeptide.

Contains 4 disulfide bonds. Expressed by the venom duct.

It localises to the secreted. Its function is as follows. Probable neurotoxin with unknown target. Possibly targets ion channels. This chain is Conotoxin Cal8.1, found in Californiconus californicus (California cone).